The following is a 510-amino-acid chain: MDSSKEAALLALMDRTGYSMVQENGQRKFGGPPPGWEGPPPPRGREVFVGKIPRDMYEDELVPVFEQAGHIYEFRLMMEFSGENRGYAFVMYTTREKAQRAIQLLDNYEIRPGKFIGVCVSLDNCRLFIGSIPKDKKKEEIQEEMMKVTEGVMDVIVYPSAVDRMKNRGFAFVEYESHKAAAMARRKLIPGTFQLWGHTIQVDWAEPEKELDEETMQRVRVLYVRNLMLSTTEETLRSEFSQLKPGSVERVKKLTDYAFIHFYNREDALTALESMNGKVIDGSPIEVTLAKPASKDGNKRFGPRNCHNGVTAAGGYGDSNFLFRTRNDMTIGAMGNGLNAHALSLPYAVDLDRCVYPFLPGSTLVPVSLNTVKPSQLSSAVSLLDYYCHKNDWSLPEYHLYSLAGQEGKVMLIYKVVISSTRRSFMPDKVCTILEDAKELAAQNALWNLDCSSGSSLNVSPPAPSGSGFLSFGCRSLPYPAYPMASISPPLPISCSSAQRLFIPNQSSFL.

The disordered stretch occupies residues 23-42; it reads ENGQRKFGGPPPGWEGPPPP. The span at 31 to 42 shows a compositional bias: pro residues; the sequence is GPPPGWEGPPPP. RRM domains follow at residues 45-123, 125-207, and 220-292; these read REVF…VSLD, CRLF…WAEP, and RVLY…LAKP.

In terms of tissue distribution, expressed in the testis and ovary.

It localises to the cytoplasm. Functionally, essential for male and female fertility, playing a crucial role in regulating germ cell development by ensuring the proper progression of meiosis prophase I. The polypeptide is Probable RNA-binding protein 46 (rbm46) (Danio rerio (Zebrafish)).